We begin with the raw amino-acid sequence, 554 residues long: Afadin- and alpha-actinin-binding protein A (554 aa).

Coiled coils occupy residues 122–287 (LEYL…SQRK) and 359–449 (ENGL…AIRL). A disordered region spans residues 508–528 (LASSGDYSRRPSKALPITSSS).

Belongs to the ADIP family. Interacts with WRAP73.

It is found in the cell junction. The protein resides in the adherens junction. The protein localises to the cytoplasm. Its subcellular location is the cytoskeleton. It localises to the microtubule organizing center. It is found in the centrosome. The protein resides in the centriolar satellite. In terms of biological role, belongs to an adhesion system, which plays a role in the organization of homotypic, interneuronal and heterotypic cell-cell adherens junctions (AJs). Involved in cell movement. Acts as a centrosome maturation factor, probably by maintaining the integrity of the pericentriolar material and proper microtubule nucleation at mitotic spindle poles. The function seems to implicate at least in part WRAP73; the SSX2IP:WRAP73 complex is proposed to act as regulator of spindle anchoring at the mitotic centrosome. In Xenopus laevis (African clawed frog), this protein is Afadin- and alpha-actinin-binding protein A (ssx2ip-a).